The primary structure comprises 122 residues: MGKARGVNNGVNESSLGYLFGSGQPSSAAAATMGTTTTTTTTTTTDGTGGRPITTTTTTVTDNKKTSAGVRGSPNNYFRSEGQNCGNFLTDRPSTKVHAAPGGGSSLDYLFGGPSPAGSGNK.

Disordered regions lie at residues 1-78 and 96-122; these read MGKA…NNYF and KVHAAPGGGSSLDYLFGGPSPAGSGNK. Residues 32–61 show a composition bias toward low complexity; sequence TMGTTTTTTTTTTTDGTGGRPITTTTTTVT. A Phosphoserine modification is found at S73.

It belongs to the SPIRAL1 family. In terms of tissue distribution, ubiquitous. Preferentially expressed in above-ground organs.

In terms of biological role, acts redundantly with SPR1 in maintaining the cortical microtubules organization essential for anisotropic cell growth. This Arabidopsis thaliana (Mouse-ear cress) protein is Protein SPIRAL1-like 3 (SP1L3).